Here is a 123-residue protein sequence, read N- to C-terminus: MKALASRGTRNHLAGEAAENSVLRDYERRGYHLVRRRWRGRCGEIDLIARSGDEVVFVEVKQSRDFARAAESLGARQMKRLHAAAAEFLAEEPDGQLTPMRFDVALVDGTGRLEIVENAFGHG.

Belongs to the UPF0102 family.

The polypeptide is UPF0102 protein SPO0400 (Ruegeria pomeroyi (strain ATCC 700808 / DSM 15171 / DSS-3) (Silicibacter pomeroyi)).